The following is a 550-amino-acid chain: Mitochondrial distribution and morphology protein 12 (550 aa).

The 550-residue stretch at 1–550 folds into the SMP-LTD domain; the sequence is MSIDLNWETV…VYPSYWTFLV (550 aa). Disordered regions lie at residues 76–97, 196–386, and 466–489; these read SDLA…DRRR, GHGH…KLRE, and ENEV…GGNG. Over residues 83–92 the composition is skewed to acidic residues; it reads GSEEDEEEIA. Residues 270 to 286 show a composition bias toward pro residues; the sequence is PPFPPSSTGGPSPPPGL. Over residues 288-305 the composition is skewed to basic residues; that stretch reads KPHHPHHPHHHHAHHAHP. The segment covering 327-344 has biased composition (basic and acidic residues); it reads PTRDKTTPSHHPDPEDVH. The segment covering 346 to 355 has biased composition (polar residues); that stretch reads PNTTTTNKQR. Low complexity predominate over residues 356-371; it reads STSPATSSPLATSAQE.

This sequence belongs to the MDM12 family. As to quaternary structure, component of the ER-mitochondria encounter structure (ERMES) or MDM complex, composed of MMM1, MDM10, MDM12 and MDM34. An MMM1 homodimer associates with one molecule of MDM12 on each side in a pairwise head-to-tail manner, and the SMP-LTD domains of MMM1 and MDM12 generate a continuous hydrophobic tunnel for phospholipid trafficking.

Its subcellular location is the mitochondrion outer membrane. It is found in the endoplasmic reticulum membrane. In terms of biological role, component of the ERMES/MDM complex, which serves as a molecular tether to connect the endoplasmic reticulum (ER) and mitochondria. Components of this complex are involved in the control of mitochondrial shape and protein biogenesis, and function in nonvesicular lipid trafficking between the ER and mitochondria. MDM12 is required for the interaction of the ER-resident membrane protein MMM1 and the outer mitochondrial membrane-resident beta-barrel protein MDM10. The MDM12-MMM1 subcomplex functions in the major beta-barrel assembly pathway that is responsible for biogenesis of all mitochondrial outer membrane beta-barrel proteins, and acts in a late step after the SAM complex. The MDM10-MDM12-MMM1 subcomplex further acts in the TOM40-specific pathway after the action of the MDM12-MMM1 complex. Essential for establishing and maintaining the structure of mitochondria and maintenance of mtDNA nucleoids. The sequence is that of Mitochondrial distribution and morphology protein 12 from Podospora anserina (strain S / ATCC MYA-4624 / DSM 980 / FGSC 10383) (Pleurage anserina).